The primary structure comprises 94 residues: Large ribosomal subunit protein bL27 (94 aa).

A propeptide spanning residues Met1–Phe9 is cleaved from the precursor. Residues His11–Ala33 are disordered.

Belongs to the bacterial ribosomal protein bL27 family. The N-terminus is cleaved by ribosomal processing cysteine protease Prp.

The sequence is that of Large ribosomal subunit protein bL27 from Streptococcus agalactiae serotype V (strain ATCC BAA-611 / 2603 V/R).